We begin with the raw amino-acid sequence, 245 residues long: DNA repair protein RecO (245 aa).

This sequence belongs to the RecO family.

Its function is as follows. Involved in DNA repair and RecF pathway recombination. This chain is DNA repair protein RecO, found in Anaplasma phagocytophilum (strain HZ).